Consider the following 449-residue polypeptide: tRNA (guanine(37)-N(1))-methyltransferase (449 aa).

Residues H216, 254 to 255 (DL), 282 to 283 (DG), and N345 contribute to the S-adenosyl-L-methionine site.

It belongs to the class I-like SAM-binding methyltransferase superfamily. TRM5/TYW2 family. In terms of assembly, monomer.

It localises to the mitochondrion matrix. Its subcellular location is the nucleus. The protein localises to the cytoplasm. The catalysed reaction is guanosine(37) in tRNA + S-adenosyl-L-methionine = N(1)-methylguanosine(37) in tRNA + S-adenosyl-L-homocysteine + H(+). Specifically methylates the N1 position of guanosine-37 in various cytoplasmic and mitochondrial tRNAs. Methylation is not dependent on the nature of the nucleoside 5' of the target nucleoside. This is the first step in the biosynthesis of wybutosine (yW), a modified base adjacent to the anticodon of tRNAs and required for accurate decoding. This chain is tRNA (guanine(37)-N(1))-methyltransferase, found in Candida albicans (strain SC5314 / ATCC MYA-2876) (Yeast).